Here is a 629-residue protein sequence, read N- to C-terminus: Acetylcholinesterase (629 aa).

The N-terminal stretch at 1–38 (MGQLSILCLFVTVCASVCGYSWPSDETTTKPSQFKDFH) is a signal peptide. A disulfide bond links C103 and C130. An N-linked (GlcNAc...) asparagine glycan is attached at N125. S253 (acyl-ester intermediate) is an active-site residue. The cysteines at positions 307 and 322 are disulfide-linked. The N-linked (GlcNAc...) asparagine glycan is linked to N308. E382 acts as the Charge relay system in catalysis. A glycan (N-linked (GlcNAc...) asparagine) is linked at N418. A disulfide bridge connects residues C458 and C574. H496 serves as the catalytic Charge relay system. N509 is a glycosylation site (N-linked (GlcNAc...) asparagine). S605 is lipidated: GPI-anchor amidated serine. The propeptide at 606-629 (SSNELLPPSTSLVLIWIMTLLNAL) is removed in mature form.

This sequence belongs to the type-B carboxylesterase/lipase family. In terms of assembly, homodimer; disulfide-linked. In terms of processing, the N-terminus is blocked.

The protein resides in the synapse. It is found in the cell membrane. It catalyses the reaction acetylcholine + H2O = choline + acetate + H(+). In terms of biological role, rapidly hydrolyzes choline released into the synapse. The polypeptide is Acetylcholinesterase (Leptinotarsa decemlineata (Colorado potato beetle)).